The primary structure comprises 112 residues: cAMP-regulated phosphoprotein 19 (112 aa).

Methionine 1 carries the post-translational modification N-acetylmethionine. Residues 1 to 11 (MSAEVPEAASA) are compositionally biased toward low complexity. The disordered stretch occupies residues 1–49 (MSAEVPEAASAEEQKEMEDKVTSPEKAEEAKLKARYPHLGQKPGGSDFL). Serine 2 carries the post-translational modification N-acetylserine. Phosphoserine is present on residues serine 2 and serine 23. Positions 12–32 (EEQKEMEDKVTSPEKAEEAKL) are enriched in basic and acidic residues. Phosphoserine; by GWL occurs at positions 62 and 104. The segment at 72–112 (MKNKQLPTATPDKTEVTGDHIPTPQDLPQRKPSLVASKLAG) is disordered. Serine 104 bears the Phosphoserine; by PKA mark. Position 109 is an N6-acetyllysine (lysine 109).

In terms of assembly, interacts (when phosphorylated at Ser-62) with PPP2R2D. Interacts with SNCA. Interacts with PPP2R2A; the interaction is direct and this interaction inhibits PP2A activity. In terms of processing, phosphorylation at Ser-62 by MASTL/GWL during mitosis is essential for interaction with PPP2R2D (PR55-delta) and subsequent inactivation of PP2A. Phosphorylated by PKA. Isoform ARPP-19 is found in all brain regions and also present in non-neuronal tissues. Isoform ARPP-16 is enriched in the caudate nucleus, found in low levels in cerebral cortex.

Its subcellular location is the cytoplasm. Its function is as follows. Protein phosphatase inhibitor that specifically inhibits protein phosphatase 2A (PP2A) during mitosis. Inhibition of PP2A is enhanced when ARPP19 is phosphorylated. When phosphorylated at Ser-62 during mitosis, specifically interacts with PPP2R2D (PR55-delta) and inhibits its activity, leading to inactivation of PP2A, an essential condition to keep cyclin-B1-CDK1 activity high during M phase. May indirectly enhance GAP-43 expression. This chain is cAMP-regulated phosphoprotein 19 (ARPP19), found in Bos taurus (Bovine).